The following is a 314-amino-acid chain: Ferrochelatase (314 aa).

H188 and E269 together coordinate Fe cation.

The protein belongs to the ferrochelatase family.

It is found in the cytoplasm. The catalysed reaction is heme b + 2 H(+) = protoporphyrin IX + Fe(2+). It functions in the pathway porphyrin-containing compound metabolism; protoheme biosynthesis; protoheme from protoporphyrin-IX: step 1/1. Functionally, catalyzes the ferrous insertion into protoporphyrin IX. This is Ferrochelatase from Campylobacter fetus subsp. fetus (strain 82-40).